The following is a 276-amino-acid chain: MDGPAIITQVTNPKEDEGRLPGAGEKASQCNVSLKKQRSRSILSSFFCCFRDYNVEAPPPSSPSVLPPLVEENGGLQKGDQRQVIPIPSPPAKYLLPEVTVLDYGKKCVVIDLDETLVHSSFKPISNADFIVPVEIDGTIHQVYVLKRPHVDEFLQRMGQLFECVLFTASLAKYADPVADLLDRWGVFRARLFRESCVFHRGNYVKDLSRLGRELSKVIIVDNSPASYIFHPENAVPVQSWFDDMTDTELLDLIPFFEGLSREDDVYSMLHRLCNR.

The disordered stretch occupies residues 1-25 (MDGPAIITQVTNPKEDEGRLPGAGE). The 159-residue stretch at 102–260 (LDYGKKCVVI…LDLIPFFEGL (159 aa)) folds into the FCP1 homology domain. Catalysis depends on aspartate 112, which acts as the 4-aspartylphosphate intermediate. Mg(2+) contacts are provided by aspartate 112, aspartate 114, and asparagine 223. Aspartate 114 serves as the catalytic Proton donor.

Interacts with REST. Monomer. Mg(2+) is required as a cofactor. Expression is restricted to non-neuronal tissues.

The protein resides in the nucleus. It catalyses the reaction O-phospho-L-seryl-[protein] + H2O = L-seryl-[protein] + phosphate. The enzyme catalyses O-phospho-L-threonyl-[protein] + H2O = L-threonyl-[protein] + phosphate. Recruited by REST to neuronal genes that contain RE-1 elements, leading to neuronal gene silencing in non-neuronal cells. Preferentially catalyzes the dephosphorylation of 'Ser-5' within the tandem 7 residue repeats in the C-terminal domain (CTD) of the largest RNA polymerase II subunit POLR2A. Negatively regulates RNA polymerase II transcription, possibly by controlling the transition from initiation/capping to processive transcript elongation. This is CTD small phosphatase-like protein (CTDSPL) from Homo sapiens (Human).